The following is a 267-amino-acid chain: Very long chain fatty acid elongase 6 (267 aa).

The N-linked (GlcNAc...) asparagine glycan is linked to Asn-2. A run of 7 helical transmembrane segments spans residues 34-51, 70-90, 111-131, 136-156, 159-179, 197-217, and 234-254; these read FLFSALYAAFIFGGRHLM, LAVFSIFGALRTGAYMLYILM, FWAYAFVLSKAPELGDTIFII, KLIFLHWYHHITVLLYSWYSY, MVAGGGWFMTMNYGVHAVMYS, FITLSQITQMLMGCVINYLVF, and IFWSSLMYLSYLLLFCHFFFE.

It belongs to the ELO family. ELOVL6 subfamily. In terms of processing, N-Glycosylated. In terms of tissue distribution, expressed in liver and barely in brain.

The protein localises to the endoplasmic reticulum membrane. The enzyme catalyses a very-long-chain acyl-CoA + malonyl-CoA + H(+) = a very-long-chain 3-oxoacyl-CoA + CO2 + CoA. It carries out the reaction hexadecanoyl-CoA + malonyl-CoA + H(+) = 3-oxooctadecanoyl-CoA + CO2 + CoA. The catalysed reaction is (9Z)-hexadecenoyl-CoA + malonyl-CoA + H(+) = 3-oxo-(11Z)-octadecenoyl-CoA + CO2 + CoA. It catalyses the reaction dodecanoyl-CoA + malonyl-CoA + H(+) = 3-oxotetradecanoyl-CoA + CO2 + CoA. The enzyme catalyses tetradecanoyl-CoA + malonyl-CoA + H(+) = 3-oxohexadecanoyl-CoA + CO2 + CoA. It carries out the reaction (9Z)-octadecenoyl-CoA + malonyl-CoA + H(+) = 3-oxo-(11Z)-eicosenoyl-CoA + CO2 + CoA. The catalysed reaction is (9Z,12Z)-octadecadienoyl-CoA + malonyl-CoA + H(+) = (11Z,14Z)-3-oxoicosa-11,14-dienoyl-CoA + CO2 + CoA. It catalyses the reaction (9Z,12Z,15Z)-octadecatrienoyl-CoA + malonyl-CoA + H(+) = (11Z,14Z,17Z)-3-oxoeicosatrienoyl-CoA + CO2 + CoA. Its pathway is lipid metabolism; fatty acid biosynthesis. With respect to regulation, the reaction is stimulated by the presence of HSD17B12, the enzyme catalyzing the second step of the elongation cycle. In terms of biological role, catalyzes the first and rate-limiting reaction of the four reactions that constitute the long-chain fatty acids elongation cycle. This endoplasmic reticulum-bound enzymatic process allows the addition of 2 carbons to the chain of long- and very long-chain fatty acids (VLCFAs) per cycle. Condensing enzyme that elongates fatty acids with 12, 14 and 16 carbons with higher activity toward C16:0 acyl-CoAs. Catalyzes the synthesis of unsaturated C16 long chain fatty acids and, to a lesser extent, C18:0 and those with low desaturation degree. May participate in the production of saturated and monounsaturated VLCFAs of different chain lengths that are involved in multiple biological processes as precursors of membrane lipids and lipid mediators. This Rattus norvegicus (Rat) protein is Very long chain fatty acid elongase 6.